We begin with the raw amino-acid sequence, 271 residues long: DNA repair protein RecO (271 aa).

The interval 248–271 (AVGVEDSVRQDGDRDSTTRTPSSA) is disordered. Residues 253-264 (DSVRQDGDRDST) show a composition bias toward basic and acidic residues.

Belongs to the RecO family.

In terms of biological role, involved in DNA repair and RecF pathway recombination. The sequence is that of DNA repair protein RecO from Rhodococcus opacus (strain B4).